The primary structure comprises 479 residues: Anaerobic nitric oxide reductase flavorubredoxin (479 aa).

The tract at residues 30 to 210 (LRGSSYNSYL…PFSRLVTPKI (181 aa)) is zinc metallo-hydrolase. The Fe cation site is built by histidine 79, glutamate 81, aspartate 83, histidine 147, aspartate 166, and histidine 227. The Flavodoxin-like domain occupies 254-393 (ITIFYDTMSN…LCREHGREIA (140 aa)). FMN is bound by residues 260 to 264 (TMSNN) and 342 to 369 (AFGS…EMSL). In terms of domain architecture, Rubredoxin-like spans 423–474 (GPRMQCSVCQWIYDPAKGEPMQDVAPGTPWSEVPDNFLCPECSLGKDVFDEL). 4 residues coordinate Fe cation: cysteine 428, cysteine 431, cysteine 461, and cysteine 464.

This sequence in the N-terminal section; belongs to the zinc metallo-hydrolase group 3 family. As to quaternary structure, homotetramer. Requires Fe cation as cofactor. FMN serves as cofactor.

It localises to the cytoplasm. It functions in the pathway nitrogen metabolism; nitric oxide reduction. Functionally, anaerobic nitric oxide reductase; uses NADH to detoxify nitric oxide (NO), protecting several 4Fe-4S NO-sensitive enzymes. Has at least 2 reductase partners, only one of which (NorW, flavorubredoxin reductase) has been identified. NO probably binds to the di-iron center; electrons enter from the NorW at rubredoxin and are transferred sequentially to the FMN center and the di-iron center. Also able to function as an aerobic oxygen reductase. The sequence is that of Anaerobic nitric oxide reductase flavorubredoxin from Escherichia coli (strain SMS-3-5 / SECEC).